The sequence spans 298 residues: ADP/ATP translocase 1 (298 aa).

The Mitochondrial intermembrane portion of the chain corresponds to 1 to 7 (MSDQALS). N-acetylserine is present on Ser-2. Residues 6 to 98 (LSFLKDFLAG…FAFKDKYKQI (93 aa)) form a Solcar 1 repeat. Ser-7 carries the phosphoserine modification. The helical transmembrane segment at 8 to 37 (FLKDFLAGGVAAAVSKTAVAPIERVKLLLQ) threads the bilayer. The Mitochondrial matrix segment spans residues 38–74 (VQHASKQISAEKQYKGIIDCVVRIPKEQGFLSFWRGN). The residue at position 52 (Lys-52) is an N6,N6,N6-trimethyllysine. Residues 75 to 99 (LANVIRYFPTQALNFAFKDKYKQIF) traverse the membrane as a helical segment. The ADP site is built by Arg-80 and Lys-92. The Mitochondrial intermembrane segment spans residues 100 to 109 (LGGVDRHKQF). The chain crosses the membrane as a helical span at residues 110 to 130 (WRYFAGNLASGGAAGATSLCF). Solcar repeat units follow at residues 111–201 (RYFA…AKGM) and 212–297 (VSWM…IKKY). Residues 131-178 (VYPLDFARTRLAADVGKGAAQREFSGLGNCLTKIFKSDGLRGLYQGFN) lie on the Mitochondrial matrix side of the membrane. Position 147 is an N6-succinyllysine (Lys-147). Position 160 is an S-nitrosocysteine (Cys-160). A helical membrane pass occupies residues 179-199 (VSVQGIIIYRAAYFGVYDTAK). Residues 200-210 (GMLPDPKNVHI) are Mitochondrial intermembrane-facing. A helical transmembrane segment spans residues 211 to 231 (IVSWMIAQTVTAVAGLVSYPF). Topologically, residues 232 to 273 (DTVRRRMMMQSGRKGADIMYTGTVDCWKKIAKDEGAKAFFKG) are mitochondrial matrix. Arg-235 lines the ADP pocket. Positions 235–240 (RRRMMM) are important for transport activity. Residues 235–240 (RRRMMM) carry the Nucleotide carrier signature motif motif. N6-succinyllysine occurs at positions 245 and 272. Residues 274 to 291 (AWSNVLRGMGGAFVLVLY) traverse the membrane as a helical segment. Residues 292 to 298 (DEIKKYV) are Mitochondrial intermembrane-facing.

The protein belongs to the mitochondrial carrier (TC 2.A.29) family. As to quaternary structure, monomer. Found in a complex with ARL2, ARL2BP and SLC25A4/ANT1. Interacts with ARL2BP. Interacts with TIMM44; leading to inhibit the presequence translocase TIMM23, thereby promoting stabilization of PINK1. In terms of processing, under cell death induction, transglutaminated by TGM2. Transglutamination leads to formation of covalent cross-links between a glutamine and the epsilon-amino group of a lysine residue, forming polymers.

The protein localises to the mitochondrion inner membrane. Its subcellular location is the membrane. The catalysed reaction is ADP(in) + ATP(out) = ADP(out) + ATP(in). It carries out the reaction H(+)(in) = H(+)(out). Its activity is regulated as follows. The matrix-open state (m-state) is inhibited by the membrane-permeable bongkrekic acid (BKA). The cytoplasmic-open state (c-state) is inhibited by the membrane-impermeable toxic inhibitor carboxyatractyloside (CATR). Proton transporter activity is inhibited by ADP:ATP antiporter activity. Functionally, ADP:ATP antiporter that mediates import of ADP into the mitochondrial matrix for ATP synthesis, and export of ATP out to fuel the cell. Cycles between the cytoplasmic-open state (c-state) and the matrix-open state (m-state): operates by the alternating access mechanism with a single substrate-binding site intermittently exposed to either the cytosolic (c-state) or matrix (m-state) side of the inner mitochondrial membrane. In addition to its ADP:ATP antiporter activity, also involved in mitochondrial uncoupling and mitochondrial permeability transition pore (mPTP) activity. Plays a role in mitochondrial uncoupling by acting as a proton transporter: proton transport uncouples the proton flows via the electron transport chain and ATP synthase to reduce the efficiency of ATP production and cause mitochondrial thermogenesis. Proton transporter activity is inhibited by ADP:ATP antiporter activity, suggesting that SLC25A4/ANT1 acts as a master regulator of mitochondrial energy output by maintaining a delicate balance between ATP production (ADP:ATP antiporter activity) and thermogenesis (proton transporter activity). Proton transporter activity requires free fatty acids as cofactor, but does not transport it. Probably mediates mitochondrial uncoupling in tissues that do not express UCP1. Also plays a key role in mPTP opening, a non-specific pore that enables free passage of the mitochondrial membranes to solutes of up to 1.5 kDa, and which contributes to cell death. It is however unclear if SLC25A4/ANT1 constitutes a pore-forming component of mPTP or regulates it. Acts as a regulator of mitophagy independently of ADP:ATP antiporter activity: promotes mitophagy via interaction with TIMM44, leading to inhibit the presequence translocase TIMM23, thereby promoting stabilization of PINK1. The polypeptide is ADP/ATP translocase 1 (Oryctolagus cuniculus (Rabbit)).